The sequence spans 58 residues: Large ribosomal subunit protein uL30 (58 aa).

The protein belongs to the universal ribosomal protein uL30 family. Part of the 50S ribosomal subunit.

The chain is Large ribosomal subunit protein uL30 from Bacteroides fragilis (strain ATCC 25285 / DSM 2151 / CCUG 4856 / JCM 11019 / LMG 10263 / NCTC 9343 / Onslow / VPI 2553 / EN-2).